The primary structure comprises 172 residues: Shikimate kinase (172 aa).

Position 8–15 (8–15 (GARASGKT)) interacts with ATP.

This sequence belongs to the shikimate kinase family.

It is found in the cytoplasm. The catalysed reaction is shikimate + ATP = 3-phosphoshikimate + ADP + H(+). Its pathway is metabolic intermediate biosynthesis; chorismate biosynthesis; chorismate from D-erythrose 4-phosphate and phosphoenolpyruvate: step 5/7. This is Shikimate kinase from Oleidesulfovibrio alaskensis (strain ATCC BAA-1058 / DSM 17464 / G20) (Desulfovibrio alaskensis).